We begin with the raw amino-acid sequence, 200 residues long: Somatotropin (200 aa).

An N-terminal signal peptide occupies residues 1–22 (MARVLVLLSVVVASLLFSQGAT). His-38 contributes to the Zn(2+) binding site. Residues Cys-71 and Cys-173 are joined by a disulfide bond. Glu-182 is a Zn(2+) binding site. A disulfide bond links Cys-190 and Cys-198.

Belongs to the somatotropin/prolactin family.

Its subcellular location is the secreted. In terms of biological role, growth hormone plays an important role in growth control and is involved in the regulation of several anabolic processes. Implicated as an osmoregulatory substance important for seawater adaptation. The polypeptide is Somatotropin (gh) (Ictalurus punctatus (Channel catfish)).